A 346-amino-acid polypeptide reads, in one-letter code: Probable dual-specificity RNA methyltransferase RlmN (346 aa).

Catalysis depends on Glu91, which acts as the Proton acceptor. One can recognise a Radical SAM core domain in the interval 97–325 (TEKRLTVCVS…VSVRYSKGLE (229 aa)). Cys104 and Cys330 are disulfide-bonded. 3 residues coordinate [4Fe-4S] cluster: Cys111, Cys115, and Cys118. Residues 158–159 (GE), Ser188, 211–213 (SLH), and Asn287 contribute to the S-adenosyl-L-methionine site. Residue Cys330 is the S-methylcysteine intermediate of the active site.

It belongs to the radical SAM superfamily. RlmN family. It depends on [4Fe-4S] cluster as a cofactor.

The protein localises to the cytoplasm. The enzyme catalyses adenosine(2503) in 23S rRNA + 2 reduced [2Fe-2S]-[ferredoxin] + 2 S-adenosyl-L-methionine = 2-methyladenosine(2503) in 23S rRNA + 5'-deoxyadenosine + L-methionine + 2 oxidized [2Fe-2S]-[ferredoxin] + S-adenosyl-L-homocysteine. It catalyses the reaction adenosine(37) in tRNA + 2 reduced [2Fe-2S]-[ferredoxin] + 2 S-adenosyl-L-methionine = 2-methyladenosine(37) in tRNA + 5'-deoxyadenosine + L-methionine + 2 oxidized [2Fe-2S]-[ferredoxin] + S-adenosyl-L-homocysteine. Its function is as follows. Specifically methylates position 2 of adenine 2503 in 23S rRNA and position 2 of adenine 37 in tRNAs. The sequence is that of Probable dual-specificity RNA methyltransferase RlmN from Picosynechococcus sp. (strain ATCC 27264 / PCC 7002 / PR-6) (Agmenellum quadruplicatum).